The chain runs to 165 residues: Transcription antitermination protein NusB (165 aa).

This sequence belongs to the NusB family.

Involved in transcription antitermination. Required for transcription of ribosomal RNA (rRNA) genes. Binds specifically to the boxA antiterminator sequence of the ribosomal RNA (rrn) operons. This is Transcription antitermination protein NusB from Nitratidesulfovibrio vulgaris (strain DSM 19637 / Miyazaki F) (Desulfovibrio vulgaris).